A 150-amino-acid chain; its full sequence is Auxin-binding protein 5 (150 aa).

Positions 1-41 (MVRRRPATGAAQRPQLAAVGRGLLLASVLAAAASSLPVAES) are cleaved as a signal peptide. 3 residues coordinate Zn(2+): H98, H100, and E104. An N-linked (GlcNAc...) asparagine glycan is attached at N136. A Zn(2+)-binding site is contributed by H147.

As to quaternary structure, homodimer.

It is found in the endoplasmic reticulum lumen. In terms of biological role, this is probably a receptor for the plant hormone auxin. In Zea mays (Maize), this protein is Auxin-binding protein 5 (ABP5).